The primary structure comprises 48 residues: Bacteriocin plantaricin-A (48 aa).

The propeptide occupies 1-25; it reads MKIQIKGMKQLSNKEMQKIVGGKSS.

As to quaternary structure, active plantaricin A is composed of an alpha chain and a beta chain.

Its function is as follows. This heat stable bacteriocin inhibits the growth of closely related Lactobacillus species. It may act as a pore-forming protein, creating a channel in the cell membrane through a 'barrel stave' mechanism. This Lactiplantibacillus plantarum (strain ATCC BAA-793 / NCIMB 8826 / WCFS1) (Lactobacillus plantarum) protein is Bacteriocin plantaricin-A (plnA).